The chain runs to 129 residues: NADPH-dependent 7-cyano-7-deazaguanine reductase (129 aa).

Cys-34 functions as the Thioimide intermediate in the catalytic mechanism. Catalysis depends on Asp-41, which acts as the Proton donor. Residues 56–58 and 75–76 each bind substrate; these read VEL and HE.

Belongs to the GTP cyclohydrolase I family. QueF type 1 subfamily.

It is found in the cytoplasm. It carries out the reaction 7-aminomethyl-7-carbaguanine + 2 NADP(+) = 7-cyano-7-deazaguanine + 2 NADPH + 3 H(+). It functions in the pathway tRNA modification; tRNA-queuosine biosynthesis. In terms of biological role, catalyzes the NADPH-dependent reduction of 7-cyano-7-deazaguanine (preQ0) to 7-aminomethyl-7-deazaguanine (preQ1). In Alkalilimnicola ehrlichii (strain ATCC BAA-1101 / DSM 17681 / MLHE-1), this protein is NADPH-dependent 7-cyano-7-deazaguanine reductase.